The sequence spans 157 residues: Putative 4-hydroxy-4-methyl-2-oxoglutarate aldolase (157 aa).

Residues 78–81 and R100 contribute to the substrate site; that span reads GDVI. An a divalent metal cation-binding site is contributed by D101.

It belongs to the class II aldolase/RraA-like family. Homotrimer. Requires a divalent metal cation as cofactor.

The catalysed reaction is 4-hydroxy-4-methyl-2-oxoglutarate = 2 pyruvate. It catalyses the reaction oxaloacetate + H(+) = pyruvate + CO2. Catalyzes the aldol cleavage of 4-hydroxy-4-methyl-2-oxoglutarate (HMG) into 2 molecules of pyruvate. Also contains a secondary oxaloacetate (OAA) decarboxylase activity due to the common pyruvate enolate transition state formed following C-C bond cleavage in the retro-aldol and decarboxylation reactions. In Mycobacterium leprae (strain Br4923), this protein is Putative 4-hydroxy-4-methyl-2-oxoglutarate aldolase.